Here is a 226-residue protein sequence, read N- to C-terminus: Membrane protein (226 aa).

Residues 1–11 (MSNGSIPVDEV) lie on the Virion surface side of the membrane. The helical transmembrane segment at 12–32 (IEHLRNWNFTWNIILTILLVV) threads the bilayer. The Intravirion segment spans residues 33–41 (LQYGHYKYS). A helical transmembrane segment spans residues 42–62 (VFLYGVKMAILWILWPLVLAL). The Virion surface portion of the chain corresponds to 63-75 (SLFDAWASFQVNW). Residues 76–96 (VFFAFSILMACITLMLWIMYF) form a helical membrane-spanning segment. Residues 97 to 226 (VNSIRLWRRT…TDSEKVPHLV (130 aa)) lie on the Intravirion side of the membrane. Residues 200-216 (RSKHGDYSAVSNPSAVL) form an interaction with N protein region.

It belongs to the alphacoronaviruses M protein family. As to quaternary structure, homomultimer. Interacts with envelope E protein in the budding compartment of the host cell, which is located between endoplasmic reticulum and the Golgi complex. Forms a complex with HE and S proteins. Interacts with nucleocapsid N protein. This interaction probably participates in RNA packaging into the virus.

The protein resides in the virion membrane. Its subcellular location is the host Golgi apparatus membrane. Its function is as follows. Component of the viral envelope that plays a central role in virus morphogenesis and assembly via its interactions with other viral proteins. The protein is Membrane protein of Sus scrofa (Pig).